The following is a 146-amino-acid chain: Prefoldin subunit alpha (146 aa).

The protein belongs to the prefoldin alpha subunit family. In terms of assembly, heterohexamer of two alpha and four beta subunits.

The protein resides in the cytoplasm. In terms of biological role, molecular chaperone capable of stabilizing a range of proteins. Seems to fulfill an ATP-independent, HSP70-like function in archaeal de novo protein folding. The polypeptide is Prefoldin subunit alpha (Methanococcus vannielii (strain ATCC 35089 / DSM 1224 / JCM 13029 / OCM 148 / SB)).